The chain runs to 651 residues: Probable export ATP-binding/permease protein Pfl01_2215 (651 aa).

Positions 6 to 244 (LQLTGISRSF…LSNEDAVPKS (239 aa)) constitute an ABC transporter domain. 42–49 (GASGSGKS) is an ATP binding site. The next 5 helical transmembrane spans lie at 250 to 270 (LVAS…ALIS), 276 to 296 (LLTM…SAIG), 524 to 544 (LALL…IGVM), 585 to 605 (LGGA…SLFI), and 614 to 634 (LTSV…FGFV).

It belongs to the ABC transporter superfamily. Macrolide exporter (TC 3.A.1.122) family. In terms of assembly, probably part of a tripartite efflux system, which is composed of an inner membrane transporter, a periplasmic membrane fusion protein, and an outer membrane component.

It is found in the cell inner membrane. In terms of biological role, probably part of a tripartite efflux system. The polypeptide is Probable export ATP-binding/permease protein Pfl01_2215 (Pseudomonas fluorescens (strain Pf0-1)).